The sequence spans 137 residues: Putative pre-16S rRNA nuclease (137 aa).

Belongs to the YqgF nuclease family.

It localises to the cytoplasm. In terms of biological role, could be a nuclease involved in processing of the 5'-end of pre-16S rRNA. This Flavobacterium psychrophilum (strain ATCC 49511 / DSM 21280 / CIP 103535 / JIP02/86) protein is Putative pre-16S rRNA nuclease.